Here is a 128-residue protein sequence, read N- to C-terminus: Cystatin-12 (128 aa).

Positions 1 to 21 are cleaved as a signal peptide; that stretch reads MLWKSVLPVALIVLGIHDCSF. 2 disulfide bridges follow: Cys82–Cys92 and Cys105–Cys125. Asn122 carries N-linked (GlcNAc...) asparagine glycosylation.

Belongs to the cystatin family.

The protein localises to the secreted. May play a specialized role in spermatogenesis. The chain is Cystatin-12 (Cst12) from Rattus norvegicus (Rat).